A 693-amino-acid polypeptide reads, in one-letter code: Elongation factor G (693 aa).

One can recognise a tr-type G domain in the interval 8 to 282; that stretch reads EKTRNIGIMA…AVVDYLPSPL (275 aa). GTP-binding positions include 17-24, 81-85, and 135-138; these read AHVDAGKT, DTPGH, and NKMD.

It belongs to the TRAFAC class translation factor GTPase superfamily. Classic translation factor GTPase family. EF-G/EF-2 subfamily.

The protein localises to the cytoplasm. Catalyzes the GTP-dependent ribosomal translocation step during translation elongation. During this step, the ribosome changes from the pre-translocational (PRE) to the post-translocational (POST) state as the newly formed A-site-bound peptidyl-tRNA and P-site-bound deacylated tRNA move to the P and E sites, respectively. Catalyzes the coordinated movement of the two tRNA molecules, the mRNA and conformational changes in the ribosome. In Streptococcus mutans serotype c (strain ATCC 700610 / UA159), this protein is Elongation factor G.